A 491-amino-acid chain; its full sequence is Cytochrome P450 2F3 (491 aa).

Residue cysteine 436 participates in heme binding.

This sequence belongs to the cytochrome P450 family. Requires heme as cofactor. As to expression, lung specific.

It localises to the endoplasmic reticulum membrane. Its subcellular location is the microsome membrane. It carries out the reaction an organic molecule + reduced [NADPH--hemoprotein reductase] + O2 = an alcohol + oxidized [NADPH--hemoprotein reductase] + H2O + H(+). In terms of biological role, bioactivates 3-methylindole (3MI) by dehydrogenation to the putative electrophile 3-methylene-indolenine. Stereoselectively catalyzes the formation of the 1R,2S-oxide from naphthalene. Lack activity with other common P450 substrates including 7-ethoxycoumarin. In Capra hircus (Goat), this protein is Cytochrome P450 2F3 (CYP2F3).